Consider the following 1145-residue polypeptide: Protein sumv-2 (1145 aa).

Residues 1–13 show a composition bias toward basic residues; the sequence is MKPGRKSLPKKNR. Disordered stretches follow at residues 1–310, 429–464, 999–1025, 1040–1059, and 1073–1145; these read MKPG…APPA, QSRT…QKAR, HSAS…AGSE, QIAA…PRTE, and ITTG…ISLI. The segment covering 14 to 34 has biased composition (polar residues); it reads ASNITEKMPTTSTEAQSSSSK. Basic and acidic residues-rich tracts occupy residues 73 to 104 and 216 to 225; these read KTTE…EPRK and VPEKKPKIED. The segment covering 226 to 248 has biased composition (low complexity); that stretch reads APTTSSPKKSTPTSAPPTRASAR. Over residues 455–464 the composition is skewed to basic and acidic residues; sequence GDEKRQQKAR. The segment covering 999–1013 has biased composition (low complexity); that stretch reads HSASSSAAPSPVGAS. The span at 1091-1102 shows a compositional bias: basic and acidic residues; that stretch reads VIERGDFRDHRP. Positions 1121 to 1136 are enriched in pro residues; the sequence is QQPPLPSPAPPPPRGP.

In terms of biological role, influences the activity of genes involved in vulval development. The polypeptide is Protein sumv-2 (Caenorhabditis elegans).